Here is a 577-residue protein sequence, read N- to C-terminus: Adenine deaminase (577 aa).

It belongs to the metallo-dependent hydrolases superfamily. Adenine deaminase family. The cofactor is Mn(2+).

It catalyses the reaction adenine + H2O + H(+) = hypoxanthine + NH4(+). In Kosmotoga olearia (strain ATCC BAA-1733 / DSM 21960 / TBF 19.5.1), this protein is Adenine deaminase.